The chain runs to 212 residues: Orotate phosphoribosyltransferase (212 aa).

Residues R97, K101, H103, and 123–131 (EDLISTGGS) contribute to the 5-phospho-alpha-D-ribose 1-diphosphate site. S127 is a binding site for orotate.

The protein belongs to the purine/pyrimidine phosphoribosyltransferase family. PyrE subfamily. In terms of assembly, homodimer. Mg(2+) serves as cofactor.

It carries out the reaction orotidine 5'-phosphate + diphosphate = orotate + 5-phospho-alpha-D-ribose 1-diphosphate. It functions in the pathway pyrimidine metabolism; UMP biosynthesis via de novo pathway; UMP from orotate: step 1/2. Catalyzes the transfer of a ribosyl phosphate group from 5-phosphoribose 1-diphosphate to orotate, leading to the formation of orotidine monophosphate (OMP). This is Orotate phosphoribosyltransferase from Phocaeicola vulgatus (strain ATCC 8482 / DSM 1447 / JCM 5826 / CCUG 4940 / NBRC 14291 / NCTC 11154) (Bacteroides vulgatus).